A 778-amino-acid chain; its full sequence is MNKKILETLEFDKVKALFEPHLLTEQGLEQLRQLAPTAKADKIKQAFAEMKEMQALFVEQPHFTILSTKEIAGVCKRLEMGADLNIEEFLLLKRVLLASRELQSFYANLENVSLEELALWFEKLHDFPQLQGNLQAFNDAGFIENFASEELARIRRKIHDSESQVRDVLQDLLKQKAQMLTEGIVASRNGRQVLPVKNTYRNKIAGVVHDISASGNTVYIEPREVVKLSEEIASLRADERYEMLRILQEISERVRPHATEIANDAWIIGHLDLIRAKVRFIQERQAVVPQLSENQEIQLLHVCHPLVKNAVANDVHFGQDLTAIVITGPNTGGKTIMLKTLGLTQVMAQSGLPILADRGSRVGIFEEIFADIGDEQSIEQSLSTFSSHMTNIVDILGKVNQHSLLLLDELGAGTDPQEGAALAMAILEDLRLRQIKTMATTHYPELKAYGIETAFVQNASMEFDTATLRPTYRFMQGVPGRSNAFEIAKRLGLSEVIVGDASQQIDQDNDVNRIIEQLEEQTLESRKRLDNIREVEQENLKMNRALKKLYNELNREKETELNKAREQAAEIVDMALSESDQILKNLHSKSQLKPHEIIEAKAKLKKLAPEKVDLSKNKVLQKAKKKRAPKVGDDIVVLSYGQRGTLTSQLKDGRWEAQVGLIKMTLEEKEFDLVQAQQEKPVKKKQVNVVKRTSGRGPQARLDLRGKRYEEAMNELDIFIDQALLNNMAQVDIIHGIGTGVIREGVTKYLQRNKHVKSFGYAPQNAGGSGATIVTFKG.

328–335 (GPNTGGKT) lines the ATP pocket. The 76-residue stretch at 702–777 (LDLRGKRYEE…GSGATIVTFK (76 aa)) folds into the Smr domain.

This sequence belongs to the DNA mismatch repair MutS family. MutS2 subfamily. As to quaternary structure, homodimer. Binds to stalled ribosomes, contacting rRNA.

In terms of biological role, endonuclease that is involved in the suppression of homologous recombination and thus may have a key role in the control of bacterial genetic diversity. Its function is as follows. Acts as a ribosome collision sensor, splitting the ribosome into its 2 subunits. Detects stalled/collided 70S ribosomes which it binds and splits by an ATP-hydrolysis driven conformational change. Acts upstream of the ribosome quality control system (RQC), a ribosome-associated complex that mediates the extraction of incompletely synthesized nascent chains from stalled ribosomes and their subsequent degradation. Probably generates substrates for RQC. This Streptococcus pneumoniae (strain Taiwan19F-14) protein is Endonuclease MutS2.